A 201-amino-acid chain; its full sequence is Ran-specific GTPase-activating protein 1 (201 aa).

2 stretches are compositionally biased toward basic and acidic residues: residues methionine 1 to alanine 17 and lysine 32 to glutamate 66. The tract at residues methionine 1 to glutamate 66 is disordered. At serine 60 the chain carries Phosphoserine. The RanBD1 domain maps to histidine 64–lysine 200.

This sequence belongs to the RANBP1 family. Interacts with GSP1 and PRP20.

Its subcellular location is the cytoplasm. It localises to the nucleus. In terms of biological role, important for the export of protein containing nuclear export signal (NES) out of the nucleus. Stimulates the GTPase activity of GSP1 and GSP2. This chain is Ran-specific GTPase-activating protein 1 (YRB1), found in Saccharomyces cerevisiae (strain ATCC 204508 / S288c) (Baker's yeast).